A 448-amino-acid polypeptide reads, in one-letter code: Phosphoglucosamine mutase (448 aa).

Ser-100 acts as the Phosphoserine intermediate in catalysis. Mg(2+) contacts are provided by Ser-100, Asp-240, Asp-242, and Asp-244. Ser-100 carries the post-translational modification Phosphoserine.

This sequence belongs to the phosphohexose mutase family. It depends on Mg(2+) as a cofactor. In terms of processing, activated by phosphorylation.

It catalyses the reaction alpha-D-glucosamine 1-phosphate = D-glucosamine 6-phosphate. Functionally, catalyzes the conversion of glucosamine-6-phosphate to glucosamine-1-phosphate. The polypeptide is Phosphoglucosamine mutase (Clostridioides difficile (strain 630) (Peptoclostridium difficile)).